The sequence spans 737 residues: Polyribonucleotide nucleotidyltransferase (737 aa).

Mg(2+) is bound by residues Asp489 and Asp495. Residues 556–615 form the KH domain; sequence PKIDTIKIDVDKIKIVIGKGGETIDKIIAETGVKIDIDEEGNVSIYSSDQDAINRAKEII. The S1 motif domain maps to 625 to 693; the sequence is DEVYRAKVVR…EKGRIDASMK (69 aa). The interval 691-737 is disordered; sequence SMKALLPRPPKPEHDEKGEKSERPHRPRHQKDHKPKKEFTETPKDSE. The span at 700–714 shows a compositional bias: basic and acidic residues; that stretch reads PKPEHDEKGEKSERP. Over residues 715-724 the composition is skewed to basic residues; sequence HRPRHQKDHK. Residues 725–737 are compositionally biased toward basic and acidic residues; the sequence is PKKEFTETPKDSE.

The protein belongs to the polyribonucleotide nucleotidyltransferase family. It depends on Mg(2+) as a cofactor.

The protein localises to the cytoplasm. It carries out the reaction RNA(n+1) + phosphate = RNA(n) + a ribonucleoside 5'-diphosphate. Involved in mRNA degradation. Catalyzes the phosphorolysis of single-stranded polyribonucleotides processively in the 3'- to 5'-direction. In Streptococcus pneumoniae (strain JJA), this protein is Polyribonucleotide nucleotidyltransferase.